A 426-amino-acid chain; its full sequence is Serine--tRNA ligase (426 aa).

Thr-229–Glu-231 provides a ligand contact to L-serine. ATP is bound by residues Arg-260–Glu-262 and Val-276. Glu-283 is an L-serine binding site. Residue Glu-349–Ser-352 participates in ATP binding. Thr-384 is a binding site for L-serine.

It belongs to the class-II aminoacyl-tRNA synthetase family. Type-1 seryl-tRNA synthetase subfamily. As to quaternary structure, homodimer. The tRNA molecule binds across the dimer.

It localises to the cytoplasm. It carries out the reaction tRNA(Ser) + L-serine + ATP = L-seryl-tRNA(Ser) + AMP + diphosphate + H(+). The catalysed reaction is tRNA(Sec) + L-serine + ATP = L-seryl-tRNA(Sec) + AMP + diphosphate + H(+). It functions in the pathway aminoacyl-tRNA biosynthesis; selenocysteinyl-tRNA(Sec) biosynthesis; L-seryl-tRNA(Sec) from L-serine and tRNA(Sec): step 1/1. Functionally, catalyzes the attachment of serine to tRNA(Ser). Is also able to aminoacylate tRNA(Sec) with serine, to form the misacylated tRNA L-seryl-tRNA(Sec), which will be further converted into selenocysteinyl-tRNA(Sec). This chain is Serine--tRNA ligase, found in Treponema pallidum (strain Nichols).